We begin with the raw amino-acid sequence, 766 residues long: General transcription and DNA repair factor IIH helicase/translocase subunit XPB2 (766 aa).

The segment at 1 to 56 (MGNDERKRPTKKMKYGGKDDQKMKNIQNVEDYYDDADEDSRDGEGEEKRRDFTDLE) is disordered. Positions 31 to 41 (DYYDDADEDSR) are enriched in acidic residues. Positions 42-56 (DGEGEEKRRDFTDLE) are enriched in basic and acidic residues. Positions 293–455 (MFGNGRARSG…DLNFLIGPKL (163 aa)) constitute a Helicase ATP-binding domain. 306 to 313 (LPCGAGKS) provides a ligand contact to ATP. Residues 408-411 (DEVH) carry the DEVH box motif. Residues 510–676 (RACEFLIRFH…SLPPPDAGSS (167 aa)) enclose the Helicase C-terminal domain. Polar residues predominate over residues 739–748 (SGRQKSGNQS). Residues 739-766 (SGRQKSGNQSKKPKDPTKRHNIFKKRYV) form a disordered region. The Nuclear localization signal signature appears at 749–765 (KKPKDPTKRHNIFKKRY). Positions 757–766 (RHNIFKKRYV) are enriched in basic residues.

It belongs to the helicase family. RAD25/XPB subfamily. As to quaternary structure, component of the 7-subunit TFIIH core complex composed of XPB, XPD, TFB1/GTF2H1, GTF2H2/P44, TFB4/GTF2H3, TFB2/GTF2H4 and TFB5/GTF2H5, which is active in NER. The core complex associates with the 3-subunit CDK-activating kinase (CAK) module composed of CYCH1/cyclin H1, CDKD and MAT1/At4g30820 to form the 10-subunit holoenzyme (holo-TFIIH) active in transcription. In terms of tissue distribution, expressed ubiquitously.

It is found in the nucleus. It carries out the reaction Couples ATP hydrolysis with the unwinding of duplex DNA by translocating in the 3'-5' direction.. The enzyme catalyses ATP + H2O = ADP + phosphate + H(+). ATP-dependent 3'-5' DNA helicase/translocase; binds dsDNA rather than ssDNA, unzipping it in a translocase rather than classical helicase activity. Component of the general transcription and DNA repair factor IIH (TFIIH) core complex. When complexed to CDK-activating kinase (CAK), involved in RNA transcription by RNA polymerase II. The ATPase activity of XPB/ERCC3, but not its helicase activity, is required for DNA opening; it may wrap around the damaged DNA wedging it open, causing localized melting and twisting that allows XPD/ERCC2 helicase to anchor. The ATP-dependent helicase activity of XPB/ERCC3 may be required for promoter escape. Also involved in transcription-coupled nucleotide excision repair (NER) of damaged DNA. In NER, TFIIH acts by opening DNA around the lesion to allow the excision of the damaged oligonucleotide and its replacement by a new DNA fragment. The structure of the TFIIH transcription complex differs from the NER-TFIIH complex. Partially complements UV sensitivity of a yeast SSL2 mutation. This chain is General transcription and DNA repair factor IIH helicase/translocase subunit XPB2 (XPB2), found in Arabidopsis thaliana (Mouse-ear cress).